The primary structure comprises 1145 residues: Major DNA-binding protein (1145 aa).

Residues 1115–1145 (APQAAAPQYSGSSSVAGKKRKANVILGDLDL) are required for nuclear localization.

The protein belongs to the herpesviridae major DNA-binding protein family. Homooligomers. Forms double-helical filaments necessary for the formation of replication compartments within the host nucleus. Interacts with the origin-binding protein. Interacts with the helicase primase complex; this interaction stimulates primer synthesis activity of the helicase-primase complex. Interacts with the DNA polymerase. Interacts with the alkaline exonuclease; this interaction increases its nuclease processivity.

The protein localises to the host nucleus. Its function is as follows. Plays several crucial roles in viral infection. Participates in the opening of the viral DNA origin to initiate replication by interacting with the origin-binding protein. May disrupt loops, hairpins and other secondary structures present on ssDNA to reduce and eliminate pausing of viral DNA polymerase at specific sites during elongation. Promotes viral DNA recombination by performing strand-transfer, characterized by the ability to transfer a DNA strand from a linear duplex to a complementary single-stranded DNA circle. Can also catalyze the renaturation of complementary single strands. Additionally, reorganizes the host cell nucleus, leading to the formation of prereplicative sites and replication compartments. This process is driven by the protein which can form double-helical filaments in the absence of DNA. The chain is Major DNA-binding protein from Equus caballus (Horse).